A 237-amino-acid chain; its full sequence is Phosphatidylserine decarboxylase proenzyme (237 aa).

The active-site Schiff-base intermediate with substrate; via pyruvic acid is serine 206. Serine 206 is modified (pyruvic acid (Ser); by autocatalysis).

The protein belongs to the phosphatidylserine decarboxylase family. PSD-A subfamily. As to quaternary structure, heterodimer of a large membrane-associated beta subunit and a small pyruvoyl-containing alpha subunit. The cofactor is pyruvate. In terms of processing, is synthesized initially as an inactive proenzyme. Formation of the active enzyme involves a self-maturation process in which the active site pyruvoyl group is generated from an internal serine residue via an autocatalytic post-translational modification. Two non-identical subunits are generated from the proenzyme in this reaction, and the pyruvate is formed at the N-terminus of the alpha chain, which is derived from the carboxyl end of the proenzyme. The post-translation cleavage follows an unusual pathway, termed non-hydrolytic serinolysis, in which the side chain hydroxyl group of the serine supplies its oxygen atom to form the C-terminus of the beta chain, while the remainder of the serine residue undergoes an oxidative deamination to produce ammonia and the pyruvoyl prosthetic group on the alpha chain.

The protein resides in the cell membrane. It catalyses the reaction a 1,2-diacyl-sn-glycero-3-phospho-L-serine + H(+) = a 1,2-diacyl-sn-glycero-3-phosphoethanolamine + CO2. It functions in the pathway phospholipid metabolism; phosphatidylethanolamine biosynthesis; phosphatidylethanolamine from CDP-diacylglycerol: step 2/2. Catalyzes the formation of phosphatidylethanolamine (PtdEtn) from phosphatidylserine (PtdSer). The protein is Phosphatidylserine decarboxylase proenzyme of Nocardia farcinica (strain IFM 10152).